A 338-amino-acid polypeptide reads, in one-letter code: Activator of 90 kDa heat shock protein ATPase homolog 1 (338 aa).

Lys-3 carries the N6-acetyllysine modification. Residue Lys-182 forms a Glycyl lysine isopeptide (Lys-Gly) (interchain with G-Cter in SUMO1) linkage. Ser-193 is modified (phosphoserine). A Glycyl lysine isopeptide (Lys-Gly) (interchain with G-Cter in SUMO2) cross-link involves residue Lys-203. Lys-212 is subject to N6-acetyllysine. A Phosphotyrosine; by ABL modification is found at Tyr-223.

Belongs to the AHA1 family. In terms of assembly, interacts with HSPCA/HSP90. Interacts with HSP90AA1; the interaction activates HSP90AA1 ATPase activity. Interacts with HSP90AB1. Interacts with GCH1. Interacts with SRPK1. Interacts with FLCN. Phosphorylation at Tyr-223 enhances binding to chaperone HSP90AA1.

Its subcellular location is the cytoplasm. It localises to the cytosol. The protein localises to the endoplasmic reticulum. In terms of biological role, acts as a co-chaperone of HSP90AA1. Activates the ATPase activity of HSP90AA1 leading to increase in its chaperone activity. Competes with the inhibitory co-chaperone FNIP1 for binding to HSP90AA1, thereby providing a reciprocal regulatory mechanism for chaperoning of client proteins. Competes with the inhibitory co-chaperone TSC1 for binding to HSP90AA1, thereby providing a reciprocal regulatory mechanism for chaperoning of client proteins. In Mus musculus (Mouse), this protein is Activator of 90 kDa heat shock protein ATPase homolog 1 (Ahsa1).